The chain runs to 132 residues: Insulin-like 3 (132 aa).

The first 21 residues, 1–21 (MDRRPLTWALVLLGPALAIAL), serve as a signal peptide directing secretion. The residue at position 27 (glutamine 27) is a Pyrrolidone carboxylic acid. 3 cysteine pairs are disulfide-bonded: cysteine 34/cysteine 117, cysteine 46/cysteine 130, and cysteine 116/cysteine 121. Residues 67 to 104 (LLRWLEGQHLLHGLMASGDPVLVLAPQPLPQASRHHHH) constitute a propeptide, c peptide like.

Belongs to the insulin family. As to quaternary structure, heterodimer of a B chain and an A chain linked by two disulfide bonds. 20% of B chains include an extra N-terminal pentapeptide. As to expression, expressed exclusively in Leydig cells of the testis.

It localises to the secreted. In terms of biological role, seems to play a role in testicular function. May be a trophic hormone with a role in testicular descent in fetal life. Is a ligand for LGR8 receptor. This Bos taurus (Bovine) protein is Insulin-like 3 (INSL3).